A 424-amino-acid polypeptide reads, in one-letter code: Probable methyltransferase EP424R (424 aa).

The Adrift-type SAM-dependent 2'-O-MTase domain maps to 103 to 315 (QIVTNAWLKM…TYIVGKNRLR (213 aa)). 2 residues coordinate S-adenosyl-L-methionine: Gly135 and Asp228. The Proton acceptor role is filled by Lys268.

The protein resides in the virion. In Ornithodoros (relapsing fever ticks), this protein is Probable methyltransferase EP424R.